A 536-amino-acid polypeptide reads, in one-letter code: Glycine-rich extracellular protein 1 (536 aa).

An N-terminal signal peptide occupies residues Met-1–Gly-22. 3 disordered regions span residues Ala-111–Asn-134, Gly-306–Trp-336, and Gly-500–Cys-536. The span at Phe-115–Lys-124 shows a compositional bias: gly residues. Over residues Gly-521–Cys-536 the composition is skewed to gly residues.

This Homo sapiens (Human) protein is Glycine-rich extracellular protein 1.